We begin with the raw amino-acid sequence, 97 residues long: Eotaxin (97 aa).

An N-terminal signal peptide occupies residues 1–23; the sequence is MQSSTALLFLLLTVTSFTSQVLA. 2 cysteine pairs are disulfide-bonded: Cys32–Cys57 and Cys33–Cys73. Residue Thr94 is glycosylated (O-linked (GalNAc...) threonine).

It belongs to the intercrine beta (chemokine CC) family. Expressed constitutively in the thymus. Expression inducible in the lung (type I alveolar epithelial cells), intestine, heart, spleen, kidney.

The protein localises to the secreted. Functionally, in response to the presence of allergens, this protein directly promotes the accumulation of eosinophils (a prominent feature of allergic inflammatory reactions), but not lymphocytes, macrophages or neutrophils. Binds to CCR3. This chain is Eotaxin (Ccl11), found in Mus musculus (Mouse).